The following is a 457-amino-acid chain: Beta-1,4-mannosyltransferase egh (457 aa).

Helical transmembrane passes span 8-28, 35-55, 57-77, 346-366, 378-398, and 415-435; these read LLHC…SGGI, FTLV…LYLL, FLTL…VFYN, LLGI…NIIF, VDFV…FGVI, and VLGA…AVIW.

The protein belongs to the glycosyltransferase 2 family.

The protein resides in the membrane. Its function is as follows. Glycosyltransferase with a proposed role in glycosphingolipid biosynthesis. Neurogenic protein implicated in epithelial development. Critical component of a differential oocyte-follicle cell adhesive system. This chain is Beta-1,4-mannosyltransferase egh (egh), found in Drosophila melanogaster (Fruit fly).